Reading from the N-terminus, the 694-residue chain is DNA primase (694 aa).

Residues 41-65 form a CHC2-type zinc finger; it reads CPFHDDKSPSFTVSPAKQFYYCFSC. In terms of domain architecture, Toprim spans 265-348; it reads DQAVVVEGYF…QGQVQLRVLN (84 aa). Glutamate 271, aspartate 317, and aspartate 319 together coordinate Mg(2+).

The protein belongs to the DnaG primase family. As to quaternary structure, monomer. Interacts with DnaB. Zn(2+) is required as a cofactor. Requires Mg(2+) as cofactor.

The catalysed reaction is ssDNA + n NTP = ssDNA/pppN(pN)n-1 hybrid + (n-1) diphosphate.. RNA polymerase that catalyzes the synthesis of short RNA molecules used as primers for DNA polymerase during DNA replication. This is DNA primase from Synechococcus elongatus (strain ATCC 33912 / PCC 7942 / FACHB-805) (Anacystis nidulans R2).